Consider the following 269-residue polypeptide: uncharacterized protein (269 aa).

4 consecutive transmembrane segments (helical) span residues 64-84 (FVYF…LAGV), 125-145 (YGIA…FLSF), 169-189 (FFIS…FLVL), and 230-250 (VFAT…IAIF).

Its subcellular location is the cell membrane. This is an uncharacterized protein from Mycoplasma genitalium (strain ATCC 33530 / DSM 19775 / NCTC 10195 / G37) (Mycoplasmoides genitalium).